A 441-amino-acid polypeptide reads, in one-letter code: Tubulin beta chain (441 aa).

GTP is bound by residues Gln-11, Glu-69, Ser-138, Gly-142, Thr-143, Gly-144, Asn-204, and Asn-226. Glu-69 contacts Mg(2+).

Belongs to the tubulin family. In terms of assembly, dimer of alpha and beta chains. A typical microtubule is a hollow water-filled tube with an outer diameter of 25 nm and an inner diameter of 15 nM. Alpha-beta heterodimers associate head-to-tail to form protofilaments running lengthwise along the microtubule wall with the beta-tubulin subunit facing the microtubule plus end conferring a structural polarity. Microtubules usually have 13 protofilaments but different protofilament numbers can be found in some organisms and specialized cells. Mg(2+) serves as cofactor.

The protein resides in the cytoplasm. It is found in the cytoskeleton. In terms of biological role, tubulin is the major constituent of microtubules, a cylinder consisting of laterally associated linear protofilaments composed of alpha- and beta-tubulin heterodimers. Microtubules grow by the addition of GTP-tubulin dimers to the microtubule end, where a stabilizing cap forms. Below the cap, tubulin dimers are in GDP-bound state, owing to GTPase activity of alpha-tubulin. This Babesia bovis protein is Tubulin beta chain.